The primary structure comprises 335 residues: Phosphate acyltransferase (335 aa).

It belongs to the PlsX family. In terms of assembly, homodimer. Probably interacts with PlsY.

The protein resides in the cytoplasm. The catalysed reaction is a fatty acyl-[ACP] + phosphate = an acyl phosphate + holo-[ACP]. The protein operates within lipid metabolism; phospholipid metabolism. In terms of biological role, catalyzes the reversible formation of acyl-phosphate (acyl-PO(4)) from acyl-[acyl-carrier-protein] (acyl-ACP). This enzyme utilizes acyl-ACP as fatty acyl donor, but not acyl-CoA. The polypeptide is Phosphate acyltransferase (Heliobacterium modesticaldum (strain ATCC 51547 / Ice1)).